Reading from the N-terminus, the 471-residue chain is Adenosylhomocysteinase (471 aa).

Substrate is bound by residues Thr-60, Asp-135, and Glu-196. 197-199 (TTT) lines the NAD(+) pocket. Substrate is bound by residues Lys-226 and Asp-230. NAD(+)-binding positions include Asn-231, 260-265 (GYGDVG), Glu-283, Asn-318, 339-341 (IGH), and Asn-387.

It belongs to the adenosylhomocysteinase family. NAD(+) is required as a cofactor.

The protein localises to the cytoplasm. The enzyme catalyses S-adenosyl-L-homocysteine + H2O = L-homocysteine + adenosine. Its pathway is amino-acid biosynthesis; L-homocysteine biosynthesis; L-homocysteine from S-adenosyl-L-homocysteine: step 1/1. May play a key role in the regulation of the intracellular concentration of adenosylhomocysteine. In Pelodictyon phaeoclathratiforme (strain DSM 5477 / BU-1), this protein is Adenosylhomocysteinase.